A 565-amino-acid chain; its full sequence is Deformed epidermal autoregulatory factor 1 homolog (565 aa).

Disordered stretches follow at residues 34-62 (GGEA…ETPR) and 162-190 (GLKG…KGGT). Residues 169–181 (PLTPGPQSPPTPL) show a composition bias toward pro residues. Thr-171 carries the phosphothreonine modification. Ser-176 carries the phosphoserine modification. Thr-179 is modified (phosphothreonine). An SAND domain is found at 193 to 273 (NWDPSVYDSE…QCLIQDGILN (81 aa)). Positions 301–316 (KRRKKENELPTTPVKK) match the Nuclear localization signal motif. Residues 403 to 478 (IAPFPEAALP…QLKTLFEQAK (76 aa)) are interaction with LMO4. A Phosphothreonine modification is found at Thr-432. Residue Ser-448 is modified to Phosphoserine. Positions 504, 507, 515, 518, 524, 528, 536, and 540 each coordinate Zn(2+). The MYND-type zinc-finger motif lies at 504-540 (CVNCGREAMNECTGCHKVNYCSTFCQRKDWKDHQHIC).

As to quaternary structure, homodimer. Interacts with LMO4; LMO4 blocks export from nucleus. Interacts with LMO2 and CLIM2. May interact with the corepressors NCOR1 and NCRO2. Identified in a complex with XRCC5 and XRCC6. Interacts (via the SAND domain) with the DNA-PK complex subunit XRCC6; the interaction is direct and may be inhibited by DNA-binding. In terms of processing, may be phosphorylated by DNA-PK complex in a DNA independent manner (in vitro).

It is found in the nucleus. Functionally, transcription factor that binds to sequence with multiple copies of 5'-TTC[CG]G-3' present in its own promoter and that of the HNRPA2B1 gene. Down-regulates transcription of these genes. Binds to the retinoic acid response element (RARE) 5'-AGGGTTCACCGAAAGTTCA-3'. Activates the proenkephalin gene independently of promoter binding, probably through protein-protein interaction. Regulates epithelial cell proliferation and side-branching in the mammary gland. Required for neural tube closure and skeletal patterning. Controls the expression of peripheral tissue antigens in pancreatic lymph nodes. Transcriptional activator of EIF4G3. May also involved in behavior. The polypeptide is Deformed epidermal autoregulatory factor 1 homolog (DEAF1) (Pan troglodytes (Chimpanzee)).